Consider the following 259-residue polypeptide: UPF0246 protein PSPA7_1607 (259 aa).

The protein belongs to the UPF0246 family.

This chain is UPF0246 protein PSPA7_1607, found in Pseudomonas paraeruginosa (strain DSM 24068 / PA7) (Pseudomonas aeruginosa (strain PA7)).